We begin with the raw amino-acid sequence, 152 residues long: Cytochrome c-type biogenesis protein CcmE 2 (152 aa).

Topologically, residues 1-8 are cytoplasmic; it reads MNPQRRRR. The helical; Signal-anchor for type II membrane protein transmembrane segment at 9-29 threads the bilayer; the sequence is LWLVLALVLAGGLATTLVAMA. The Periplasmic portion of the chain corresponds to 30-152; it reads LQRNVAYLYT…HQVAPAKVTQ (123 aa). Residues His123 and Tyr127 each coordinate heme.

Belongs to the CcmE/CycJ family.

It localises to the cell inner membrane. Functionally, heme chaperone required for the biogenesis of c-type cytochromes. Transiently binds heme delivered by CcmC and transfers the heme to apo-cytochromes in a process facilitated by CcmF and CcmH. This Xanthomonas campestris pv. campestris (strain 8004) protein is Cytochrome c-type biogenesis protein CcmE 2.